The following is a 286-amino-acid chain: Beta-lactamase SHV-5 (286 aa).

The signal sequence occupies residues M1–A21. The active-site Acyl-ester intermediate is the S66. C73 and C119 are oxidised to a cystine. The Proton acceptor role is filled by E164. K230–G232 is a binding site for substrate.

The protein belongs to the class-A beta-lactamase family.

It catalyses the reaction a beta-lactam + H2O = a substituted beta-amino acid. Functionally, SHV enzymes hydrolyze broad spectrum cephalosporins notably cefotaxime and ceftazidime. SHV-5 causes particularly high levels of resistance to aztreonam and ceftazidime. The protein is Beta-lactamase SHV-5 (bla) of Klebsiella pneumoniae.